The primary structure comprises 416 residues: UV excision repair protein RAD23 homolog B (416 aa).

The Ubiquitin-like domain occupies 1–79; that stretch reads MQVTLKTLQQ…VVVMVTKPKA (79 aa). Positions 83 to 111 are enriched in low complexity; sequence AVPATTQPSSTPSPTAVSSSPAVAAAQAP. The segment at 83-175 is disordered; that stretch reads AVPATTQPSS…STPGDSSRSN (93 aa). Over residues 112-121 the composition is skewed to pro residues; it reads APTPALPPTS. Positions 122 to 143 are enriched in low complexity; it reads TPASTAPASTTASSEPAPAGAT. At threonine 155 the chain carries Phosphothreonine. 2 positions are modified to phosphoserine: serine 160 and serine 174. Residue threonine 186 is modified to Phosphothreonine. A UBA 1 domain is found at 188–228; the sequence is QSYENMVTEIMSMGYEREQVIAALRASFNNPDRAVEYLLMG. A Phosphoserine modification is found at serine 199. Tyrosine 202 carries the post-translational modification Phosphotyrosine. The STI1 domain occupies 274 to 317; that stretch reads HPLEFLRNQPQFQQMRQIIQQNPSLLPALLQQIGRENPQLLQQI. The tract at residues 333-356 is disordered; the sequence is QEAGSQGGGGGGGGGGGGGGGGGI. Positions 337 to 356 are enriched in gly residues; sequence SQGGGGGGGGGGGGGGGGGI. The region spanning 371 to 411 is the UBA 2 domain; that stretch reads PQEKEAIERLKALGFPEGLVIQAYFACEKNENLAANFLLQQ.

It belongs to the RAD23 family. As to quaternary structure, component of the XPC complex composed of XPC, RAD23B and CETN2. Interacts with NGLY1 and PSMC1. Interacts with ATXN3. Interacts with AMFR. Interacts with VCP; the interaction is indirect and mediated by NGLY1.

The protein resides in the nucleus. It localises to the cytoplasm. Its function is as follows. Multiubiquitin chain receptor involved in modulation of proteasomal degradation. Binds to polyubiquitin chains. Proposed to be capable to bind simultaneously to the 26S proteasome and to polyubiquitinated substrates and to deliver ubiquitinated proteins to the proteasome. May play a role in endoplasmic reticulum-associated degradation (ERAD) of misfolded glycoproteins by association with PNGase and delivering deglycosylated proteins to the proteasome. In terms of biological role, involved in global genome nucleotide excision repair (GG-NER) by acting as component of the XPC complex. Cooperatively with Cetn2 appears to stabilize Xpc. May protect Xpc from proteasomal degradation. The XPC complex is proposed to represent the first factor bound at the sites of DNA damage and together with other core recognition factors, Xpa, RPA and the TFIIH complex, is part of the pre-incision (or initial recognition) complex. The XPC complex recognizes a wide spectrum of damaged DNA characterized by distortions of the DNA helix such as single-stranded loops, mismatched bubbles or single-stranded overhangs. The orientation of XPC complex binding appears to be crucial for inducing a productive NER. XPC complex is proposed to recognize and to interact with unpaired bases on the undamaged DNA strand which is followed by recruitment of the TFIIH complex and subsequent scanning for lesions in the opposite strand in a 5'-to-3' direction by the NER machinery. Cyclobutane pyrimidine dimers (CPDs) which are formed upon UV-induced DNA damage esacpe detection by the XPC complex due to a low degree of structural perurbation. Instead they are detected by the UV-DDB complex which in turn recruits and cooperates with the XPC complex in the respective DNA repair. In vitro, the Xpc:Rad23b dimer is sufficient to initiate NER; it preferentially binds to cisplatin and UV-damaged double-stranded DNA and also binds to a variety of chemically and structurally diverse DNA adducts. Xpc:Rad23b contacts DNA both 5' and 3' of a cisplatin lesion with a preference for the 5' side. Xpc:Rad23bB induces a bend in DNA upon binding. Xpc:Rad23b stimulates the activity of DNA glycosylases Tdg and Smug1. This chain is UV excision repair protein RAD23 homolog B (Rad23b), found in Mus musculus (Mouse).